Reading from the N-terminus, the 372-residue chain is Alanine dehydrogenase (372 aa).

The substrate site is built by Arg-15 and Lys-75. His-96 serves as the catalytic Proton donor/acceptor. NAD(+) is bound by residues Ser-134, 178–179 (TA), Asp-198, Ser-220, 239–240 (VL), 266–269 (IAID), Arg-279, and 298–301 (VANM). Asp-269 functions as the Proton donor/acceptor in the catalytic mechanism.

This sequence belongs to the AlaDH/PNT family. As to quaternary structure, homohexamer.

The protein resides in the cytoplasm. The catalysed reaction is L-alanine + NAD(+) + H2O = pyruvate + NH4(+) + NADH + H(+). Its pathway is amino-acid degradation; L-alanine degradation via dehydrogenase pathway; NH(3) and pyruvate from L-alanine: step 1/1. Functionally, catalyzes the reversible reductive amination of pyruvate to L-alanine. A key factor in the assimilation of L-alanine as an energy source via the tricarboxylic acid cycle during sporulation. The sequence is that of Alanine dehydrogenase (ald) from Geobacillus stearothermophilus (Bacillus stearothermophilus).